Here is a 498-residue protein sequence, read N- to C-terminus: NADPH:adrenodoxin oxidoreductase, mitochondrial (498 aa).

Residues 1-37 (MSTHKAALCKVQILKLFLISARCVRITRFYGVCGLST) constitute a mitochondrion transit peptide. 4 residues coordinate FAD: alanine 54, glutamate 75, leucine 83, and valine 119. Residues 190–193 (QGNV), 234–235 (RR), and glutamate 246 contribute to the NADP(+) site. Residues tryptophan 404 and 411–413 (GVI) each bind FAD. Glycine 411 contributes to the NADP(+) binding site. A compositionally biased stretch (basic and acidic residues) spans 469–488 (DSEETRRGETRGKPREKMLD). The interval 469 to 489 (DSEETRRGETRGKPREKMLDV) is disordered.

It belongs to the ferredoxin--NADP reductase type 1 family. FAD is required as a cofactor.

It is found in the mitochondrion inner membrane. The catalysed reaction is 2 reduced [adrenodoxin] + NADP(+) + H(+) = 2 oxidized [adrenodoxin] + NADPH. It participates in steroid metabolism; cholesterol metabolism. Its function is as follows. Serves as the first electron transfer protein in all the mitochondrial P450 systems including cholesterol side chain cleavage in all steroidogenic tissues, steroid 11-beta hydroxylation in the adrenal cortex, 25-OH-vitamin D3-24 hydroxylation in the kidney, and sterol C-27 hydroxylation in the liver. This Salvelinus fontinalis (Brook trout) protein is NADPH:adrenodoxin oxidoreductase, mitochondrial (fdxr).